Consider the following 66-residue polypeptide: Light-harvesting protein B-800-850 alpha chain B (66 aa).

The Cytoplasmic portion of the chain corresponds to 1–11; sequence MNQGRIWTVVN. The chain crosses the membrane as a helical span at residues 12–35; that stretch reads PGVGLPLLLGSVTVIAILVHYAVL. His-31 serves as a coordination point for a bacteriochlorophyll. At 36 to 66 the chain is on the periplasmic side; sequence SNTTWFPKYWNGATVAAPAAAPAPAAPAAKK.

This sequence belongs to the antenna complex alpha subunit family. The core complex is formed by different alpha and beta chains, binding bacteriochlorophyll molecules, and arranged most probably in tetrameric structures disposed around the reaction center. The non-pigmented gamma chains may constitute additional components.

It is found in the cell inner membrane. Functionally, antenna complexes are light-harvesting systems, which transfer the excitation energy to the reaction centers. The polypeptide is Light-harvesting protein B-800-850 alpha chain B (pucAB) (Rhodopseudomonas palustris (strain ATCC BAA-98 / CGA009)).